Reading from the N-terminus, the 387-residue chain is Xylose isomerase (387 aa).

Catalysis depends on residues His-53 and Asp-56. Positions 180, 216, 219, 244, 254, 256, and 286 each coordinate Mg(2+).

It belongs to the xylose isomerase family. As to quaternary structure, homotetramer. Mg(2+) is required as a cofactor.

Its subcellular location is the cytoplasm. It catalyses the reaction alpha-D-xylose = alpha-D-xylulofuranose. The chain is Xylose isomerase (xylA) from Thermus caldophilus.